The following is a 154-amino-acid chain: 6,7-dimethyl-8-ribityllumazine synthase (154 aa).

Residues W23, A57–E59, and A81–I83 each bind 5-amino-6-(D-ribitylamino)uracil. A86–T87 is a binding site for (2S)-2-hydroxy-3-oxobutyl phosphate. The active-site Proton donor is H89. F114 lines the 5-amino-6-(D-ribitylamino)uracil pocket. R128 contacts (2S)-2-hydroxy-3-oxobutyl phosphate.

Belongs to the DMRL synthase family.

It catalyses the reaction (2S)-2-hydroxy-3-oxobutyl phosphate + 5-amino-6-(D-ribitylamino)uracil = 6,7-dimethyl-8-(1-D-ribityl)lumazine + phosphate + 2 H2O + H(+). Its pathway is cofactor biosynthesis; riboflavin biosynthesis; riboflavin from 2-hydroxy-3-oxobutyl phosphate and 5-amino-6-(D-ribitylamino)uracil: step 1/2. Functionally, catalyzes the formation of 6,7-dimethyl-8-ribityllumazine by condensation of 5-amino-6-(D-ribitylamino)uracil with 3,4-dihydroxy-2-butanone 4-phosphate. This is the penultimate step in the biosynthesis of riboflavin. The chain is 6,7-dimethyl-8-ribityllumazine synthase from Sulfurimonas denitrificans (strain ATCC 33889 / DSM 1251) (Thiomicrospira denitrificans (strain ATCC 33889 / DSM 1251)).